Consider the following 1493-residue polypeptide: Inactive serine/threonine-protein kinase TEX14 (1493 aa).

ANK repeat units follow at residues 27–54 (LHEY…AVNS), 55–84 (LGQT…DPNH), and 88–117 (DGST…DLRL). One can recognise a Protein kinase domain in the interval 198–511 (VISAQNIYSF…IMKNDLKDFI (314 aa)). ATP-binding positions include 204 to 212 (IYSFGFGKF) and Lys266. The residue at position 430 (Ser430) is a Phosphoserine; by PLK1. A compositionally biased stretch (polar residues) spans 559–573 (GSQFHSPRGHSSPTG). Residues 559–615 (GSQFHSPRGHSSPTGKATPEPPVPDVSPVAQQTHRQDAASPACSVAEEARNPSPDQT) are disordered. 2 positions are modified to phosphoserine: Ser560 and Ser660. Disordered regions lie at residues 782-904 (HDSP…RISM) and 940-1081 (AATG…LTPD). The GPPX3Y signature appears at 789–795 (GPPASSY). The short motif at 846 to 854 (KASLERDRN) is the D-box element. Composition is skewed to polar residues over residues 855 to 904 (QNTS…RISM) and 1001 to 1020 (CGQT…QRFT). The span at 1026 to 1037 (PPREDEQPEHSE) shows a compositional bias: basic and acidic residues. The segment covering 1053-1064 (YSGQSAQSTCSP) has biased composition (polar residues). The segment covering 1066–1075 (SSEDTEDMTD) has biased composition (acidic residues). Ser1100 carries the phosphoserine modification. Residues 1115–1167 (RPQASGEEKFQMRKNLGKNSEILTKSQFQPIRSPEGEQDETLKEPPKEVKEKD) are disordered. Over residues 1131–1144 (GKNSEILTKSQFQP) the composition is skewed to polar residues. Residues 1154 to 1167 (ETLKEPPKEVKEKD) are compositionally biased toward basic and acidic residues. Position 1262 is a phosphoserine (Ser1262). Disordered stretches follow at residues 1288 to 1307 (GAGS…ATQR) and 1341 to 1466 (KGQQ…EEEE). The segment covering 1343–1362 (QQVSSTALDENTASRPGSTE) has biased composition (polar residues). Residues 1363–1380 (NDQRHLEEQETHSNKEDS) show a composition bias toward basic and acidic residues. Ser1400 carries the phosphoserine modification. Residues 1426-1456 (PAREASSKDQEVGEKKRKGEESTKPEKRKPE) show a composition bias toward basic and acidic residues. Ser1492 is subject to Phosphoserine.

It belongs to the protein kinase superfamily. Interacts with KIF23 and RBM44. Interacts with CEP55; inhibiting interaction between CEP55 and PDCD6IP/ALIX and TSG101. In terms of processing, phosphorylated on Thr residues by CDK1 during early phases of mitosis, promoting the interaction with PLK1 and recruitment to kinetochores. Phosphorylated on Ser-430 by PLK1 during late prometaphase promotes the rapid depletion from kinetochores and its subsequent degradation by the APC/C complex.

It localises to the cytoplasm. The protein resides in the midbody. Its subcellular location is the chromosome. The protein localises to the centromere. It is found in the kinetochore. Required both for the formation of intercellular bridges during meiosis and for kinetochore-microtubule attachment during mitosis. Intercellular bridges are evolutionarily conserved structures that connect differentiating germ cells and are required for spermatogenesis and male fertility. Acts by promoting the conversion of midbodies into intercellular bridges via its interaction with CEP55: interaction with CEP55 inhibits the interaction between CEP55 and PDCD6IP/ALIX and TSG101, blocking cell abscission and leading to transform midbodies into intercellular bridges. Also plays a role during mitosis: recruited to kinetochores by PLK1 during early mitosis and regulates the maturation of the outer kinetochores and microtubule attachment. Has no protein kinase activity in vitro. The protein is Inactive serine/threonine-protein kinase TEX14 (TEX14) of Bos taurus (Bovine).